The chain runs to 391 residues: Ribonuclease 3-like protein 2 (391 aa).

The Nuclear export signal motif lies at 7–26 (PEYNFPAITRCSLSNSLPHR). The region spanning 60–203 (MEAVEKILNY…LAGAVYVDVN (144 aa)) is the RNase III domain. Glutamate 96, aspartate 189, and glutamate 192 together coordinate Mg(2+). DRBM domains lie at 218–294 (EPIV…KLSE) and 313–387 (HAKT…ALRK). Cysteine 240 and cysteine 322 form a disulfide bridge. A Bipartite nuclear localization motif is present at residues 371–387 (KKAESSSAYHMIRALRK).

As to quaternary structure, homodimer; disulfide-linked. The cofactor is Mg(2+). Requires Mn(2+) as cofactor. As to expression, expressed in seeds, leaves and flower buds.

The protein resides in the nucleus. Its subcellular location is the cytoplasm. Ribonuclease that cleaves double-stranded RNA (dsRNA). Required for 3'-external transcribed spacer (ETS) cleavage of the pre-rRNA precursors. May promote the production of 21 nucleotide small interfering RNA (siRNA) during post-transcriptional gene silencing (PTGS). This chain is Ribonuclease 3-like protein 2 (RTL2), found in Arabidopsis thaliana (Mouse-ear cress).